The following is a 379-amino-acid chain: Dual-specificity RNA methyltransferase RlmN (379 aa).

The active-site Proton acceptor is E95. In terms of domain architecture, Radical SAM core spans 101-345 (EETRGTLCVS…TTVRKTRGDD (245 aa)). An intrachain disulfide couples C108 to C350. Residues C115, C119, and C122 each contribute to the [4Fe-4S] cluster site. S-adenosyl-L-methionine contacts are provided by residues 176 to 177 (GE), S208, 230 to 232 (SLH), and N307. Catalysis depends on C350, which acts as the S-methylcysteine intermediate.

It belongs to the radical SAM superfamily. RlmN family. [4Fe-4S] cluster is required as a cofactor.

It localises to the cytoplasm. The catalysed reaction is adenosine(2503) in 23S rRNA + 2 reduced [2Fe-2S]-[ferredoxin] + 2 S-adenosyl-L-methionine = 2-methyladenosine(2503) in 23S rRNA + 5'-deoxyadenosine + L-methionine + 2 oxidized [2Fe-2S]-[ferredoxin] + S-adenosyl-L-homocysteine. The enzyme catalyses adenosine(37) in tRNA + 2 reduced [2Fe-2S]-[ferredoxin] + 2 S-adenosyl-L-methionine = 2-methyladenosine(37) in tRNA + 5'-deoxyadenosine + L-methionine + 2 oxidized [2Fe-2S]-[ferredoxin] + S-adenosyl-L-homocysteine. Its function is as follows. Specifically methylates position 2 of adenine 2503 in 23S rRNA and position 2 of adenine 37 in tRNAs. m2A2503 modification seems to play a crucial role in the proofreading step occurring at the peptidyl transferase center and thus would serve to optimize ribosomal fidelity. In Burkholderia lata (strain ATCC 17760 / DSM 23089 / LMG 22485 / NCIMB 9086 / R18194 / 383), this protein is Dual-specificity RNA methyltransferase RlmN.